We begin with the raw amino-acid sequence, 310 residues long: Olfactory receptor 2A7 (310 aa).

The Extracellular portion of the chain corresponds to 1–24 (MGNNMTLITEFILLGFPLSPRMQM). Asparagine 4 carries N-linked (GlcNAc...) asparagine glycosylation. Residues 25-45 (LLFALFSLFYAFTLLGNGTIV) traverse the membrane as a helical segment. Residues 46–53 (GLICLDSR) lie on the Cytoplasmic side of the membrane. The helical transmembrane segment at 54 to 74 (LHTPMYFFLSHLAIVDIAYAC) threads the bilayer. Residues 75–96 (NTVPQMLVNLLDPVKPISYAGC) lie on the Extracellular side of the membrane. The cysteines at positions 96 and 178 are disulfide-linked. The helical transmembrane segment at 97-117 (MTQTFLFLTFAITECLLLVVM) threads the bilayer. Over 118-148 (SYDRYVAICHPLRYSAIMSWRVCSTMAVTSW) the chain is Cytoplasmic. The helical transmembrane segment at 149–169 (IIGVLLSLIHLVLLLPLPFCV) threads the bilayer. Residues 170–204 (SQKVNHFFCEITAILKLACADTHLNETMVLAGAVS) are Extracellular-facing. Asparagine 194 is a glycosylation site (N-linked (GlcNAc...) asparagine). A helical transmembrane segment spans residues 205–225 (VLVGPFSSIVVSYACILGAIL). Over 226–239 (KIQSEEGQRKAFST) the chain is Cytoplasmic. A helical transmembrane segment spans residues 240–260 (CSSHLCVVGLFYGTAIVMYVG). Over 261–273 (PRHGSPKEQKKYL) the chain is Extracellular. Residues 274-291 (LLFHSLFNPMLNPLIYSL) traverse the membrane as a helical segment. The Cytoplasmic portion of the chain corresponds to 292–310 (RNSDVKNTLKRVLRTQRAL).

This sequence belongs to the G-protein coupled receptor 1 family. In terms of tissue distribution, olfactory epithelium.

Its subcellular location is the cell membrane. Odorant receptor. This chain is Olfactory receptor 2A7, found in Mus musculus (Mouse).